Consider the following 554-residue polypeptide: HMG box-containing protein 4 (554 aa).

Disordered regions lie at residues 14-34, 47-368, and 418-468; these read RGME…KRSY, QVRK…SAYQ, and HKQN…SPAK. The segment covering 117–127 has biased composition (polar residues); that stretch reads TSPQVDTSTTH. Positions 221 to 230 are enriched in basic and acidic residues; sequence TGREETESRS. The span at 242–255 shows a compositional bias: polar residues; the sequence is PRSGGTPDSASSTG. The segment covering 272–300 has biased composition (basic residues); it reads MKKKKKSKKSKKKKDKHKDEKHRKHSKSK. Over residues 317-335 the composition is skewed to pro residues; that stretch reads LPSPPPPTATTPTSPPSVP. Basic and acidic residues predominate over residues 342 to 358; the sequence is HAEEQLDKKKKKEDPEK. A DNA-binding region (HMG box) is located at residues 360-428; the sequence is KKKNMSAYQV…KQNKAEATTV (69 aa). Over residues 434 to 466 the composition is skewed to low complexity; sequence SSESAARSKGSSSGLPSPNKKSPTSVVSFSTSP.

Interacts with nlk.2.

It is found in the nucleus. Negatively regulates Wnt/beta-catenin signaling during development. In Xenopus tropicalis (Western clawed frog), this protein is HMG box-containing protein 4 (hmgxb4).